A 989-amino-acid chain; its full sequence is Envelope glycoprotein gp160 (989 aa).

Residues M1–N106 form the signal peptide. Residues Q107–Y838 lie on the Extracellular side of the membrane. N-linked (GlcNAc...) asparagine; by host glycans are attached at residues N140, N161, N206, N258, N298, N364, N381, N387, N403, N435, N439, N470, N475, N481, N491, N501, N515, N527, N537, N542, N543, N551, and N568. The tract at residues G663 to L683 is fusion peptide. Residues R695–V745 are a coiled coil. The N-linked (GlcNAc...) asparagine; by host glycan is linked to N703. Residues L729–V745 are immunosuppression. N771, N778, N794, and N828 each carry an N-linked (GlcNAc...) asparagine; by host glycan. Residues E786–K821 adopt a coiled-coil conformation. The chain crosses the membrane as a helical span at residues I839–I859. Residues S860–L989 are Cytoplasmic-facing. A lipid anchor (S-palmitoyl cysteine; by host) is attached at C862.

The mature envelope protein (Env) consists of a trimer of SU-TM heterodimers attached by noncovalent interactions or by a labile interchain disulfide bond. Specific enzymatic cleavages in vivo yield mature proteins. Envelope glycoproteins are synthesized as an inactive precursor that is N-glycosylated and processed likely by host cell furin or by a furin-like protease in the Golgi to yield the mature SU and TM proteins. The cleavage site between SU and TM requires the minimal sequence [KR]-X-[KR]-R. Post-translationally, the transmembrane protein is palmitoylated.

It localises to the virion membrane. The protein localises to the host cell membrane. The surface protein (SU) attaches the virus to the host cell by binding to its receptor. This interaction triggers the refolding of the transmembrane protein (TM) and is thought to activate its fusogenic potential by unmasking its fusion peptide. Fusion occurs at the host cell plasma membrane. Its function is as follows. The transmembrane protein (TM) acts as a class I viral fusion protein. Under the current model, the protein has at least 3 conformational states: pre-fusion native state, pre-hairpin intermediate state, and post-fusion hairpin state. During viral and target cell membrane fusion, the coiled coil regions (heptad repeats) assume a trimer-of-hairpins structure, positioning the fusion peptide in close proximity to the C-terminal region of the ectodomain. The formation of this structure appears to drive apposition and subsequent fusion of viral and target cell membranes. Membranes fusion leads to delivery of the nucleocapsid into the cytoplasm. This chain is Envelope glycoprotein gp160 (env), found in Ovis aries (Sheep).